We begin with the raw amino-acid sequence, 698 residues long: eEF1A lysine and N-terminal methyltransferase (698 aa).

Position 1 is an N-acetylmethionine (methionine 1). At serine 267 the chain carries Phosphoserine. Positions 431-461 (KDTSHRAQKKRKKDRKKQRPADTSEDFPPAP) are disordered. Over residues 436-448 (RAQKKRKKDRKKQ) the composition is skewed to basic residues.

Belongs to the methyltransferase superfamily. As to quaternary structure, forms a tripartite complex containing GAB1, METTL13 and SPRY2. Within the complex interacts with GAB1 and SPRY2. Expressed in the inner ear (at protein level). Expression is detected in the cochlear duct, spiral limbus region, efferent and afferent nerves, and in spiral ganglion neurons (at protein level).

It localises to the cytoplasm. The protein localises to the nucleus. The protein resides in the mitochondrion. The catalysed reaction is L-lysyl-[protein] + S-adenosyl-L-methionine = N(6)-methyl-L-lysyl-[protein] + S-adenosyl-L-homocysteine + H(+). The enzyme catalyses N(6)-methyl-L-lysyl-[protein] + S-adenosyl-L-methionine = N(6),N(6)-dimethyl-L-lysyl-[protein] + S-adenosyl-L-homocysteine + H(+). It carries out the reaction N-terminal glycyl-L-lysyl-L-glutamyl-[protein] + 3 S-adenosyl-L-methionine = N-terminal N,N,N-trimethyl-glycyl-L-lysyl-L-glutamyl-[protein] + 3 S-adenosyl-L-homocysteine + 3 H(+). Functionally, dual methyltransferase that catalyzes methylation of elongation factor 1-alpha (EEF1A1 and EEF1A2) at two different positions, and is therefore involved in the regulation of mRNA translation. Via its C-terminus, methylates EEF1A1 and EEF1A2 at the N-terminal residue 'Gly-2'. Via its N-terminus dimethylates EEF1A1 and EEF1A2 at residue 'Lys-55'. Has no activity towards core histones H2A, H2B, H3 and H4. The protein is eEF1A lysine and N-terminal methyltransferase of Mus musculus (Mouse).